Reading from the N-terminus, the 53-residue chain is Mannose/glucose-specific lectin alpha 1 chain (53 aa).

This sequence belongs to the leguminous lectin family. In terms of assembly, tetramer of two alpha and two beta chains.

The protein is Mannose/glucose-specific lectin alpha 1 chain of Lathyrus ochrus (Cyprus-vetch).